The primary structure comprises 554 residues: MAYYQQPHDITRLPAWQALQQHRAEMAGFSMREAFAGDPRRFQRFSLDSCGLLLDYSKNLITEKSLELLIQLAEQADLHEAIAALYNGERVNASEGRAALHTALRSPIGRRLLVDGNDIIPEVHRVLNQVTELVSRIHSGLWRGYSEKPIKEVVNIGIGGSFLGPQLVSEALRPFTQRGVRCHYLANIDGSEFRELTARLDPETTLFIVSSKSFGTLETLKNTLAARDWYLAMGGPEEQLHRHFIAVTSNRKAAIEFGIGEENIFPMWDWVGGRYSLWSAIGLPIALAIGVSNFKELLAGAYAMDEHFTQAPLAENMPVLMALLGVWYTNFWGAQSHAILPYDHYLRNFTKHLQQLDMESNGKSVRQDGTPLDIATGPIIWGGVGCNGQHAYHQLLHQGRLLVPADFIVPVNSYNPLSDHHQWLFANCLSQAQALMQGKTREEAEVELRAKGLSEDEVQRLAPHKVIPGNRPSNILVMNRIAPFNLGALVALYEHKVFVQSAIWGINAFDQWGVELGKEMGKEVYQRLTGASGEPASDASTQGLIEHFRSQHRG.

Glu359 acts as the Proton donor in catalysis. Active-site residues include His390 and Lys518.

The protein belongs to the GPI family.

Its subcellular location is the cytoplasm. The enzyme catalyses alpha-D-glucose 6-phosphate = beta-D-fructose 6-phosphate. It functions in the pathway carbohydrate biosynthesis; gluconeogenesis. It participates in carbohydrate degradation; glycolysis; D-glyceraldehyde 3-phosphate and glycerone phosphate from D-glucose: step 2/4. Functionally, catalyzes the reversible isomerization of glucose-6-phosphate to fructose-6-phosphate. The chain is Glucose-6-phosphate isomerase from Ectopseudomonas mendocina (strain ymp) (Pseudomonas mendocina).